Reading from the N-terminus, the 176-residue chain is Large ribosomal subunit protein uL6 (176 aa).

Belongs to the universal ribosomal protein uL6 family. Part of the 50S ribosomal subunit.

Its function is as follows. This protein binds to the 23S rRNA, and is important in its secondary structure. It is located near the subunit interface in the base of the L7/L12 stalk, and near the tRNA binding site of the peptidyltransferase center. This chain is Large ribosomal subunit protein uL6, found in Dechloromonas aromatica (strain RCB).